A 389-amino-acid chain; its full sequence is Mannitol-1-phosphate 5-dehydrogenase (389 aa).

7 to 18 contributes to the NAD(+) binding site; the sequence is AVHFGGGNIGRG. Lysine 216 is a catalytic residue.

It belongs to the mannitol dehydrogenase family. Monomer.

It carries out the reaction D-mannitol 1-phosphate + NAD(+) = beta-D-fructose 6-phosphate + NADH + H(+). In terms of biological role, catalyzes the NAD(H)-dependent interconversion of D-fructose 6-phosphate and D-mannitol 1-phosphate in the mannitol metabolic pathway. This Pyrenophora tritici-repentis (strain Pt-1C-BFP) (Wheat tan spot fungus) protein is Mannitol-1-phosphate 5-dehydrogenase.